Reading from the N-terminus, the 166-residue chain is MQCPHCHHNGSRVVDSRPTDDGRVIRRRRECESCGFRFTTFERVEVTPLLVIKKNGTREEFNREKVLRGIIRSAEKRPVGMDVMTQIVDEVENKIRALGVSEISSQLIGEYVMNRLVDVDEIAYIRFASVYRQFKDTGVFFNELKDMLDKDKLKAKKETNGKSEAK.

A zinc finger spans residues 3-34 (CPHCHHNGSRVVDSRPTDDGRVIRRRRECESC). In terms of domain architecture, ATP-cone spans 49-139 (LLVIKKNGTR…VYRQFKDTGV (91 aa)).

This sequence belongs to the NrdR family. Zn(2+) serves as cofactor.

Its function is as follows. Negatively regulates transcription of bacterial ribonucleotide reductase nrd genes and operons by binding to NrdR-boxes. This is Transcriptional repressor NrdR from Levilactobacillus brevis (strain ATCC 367 / BCRC 12310 / CIP 105137 / JCM 1170 / LMG 11437 / NCIMB 947 / NCTC 947) (Lactobacillus brevis).